The sequence spans 266 residues: Chorismate mutase (266 aa).

The Chorismate mutase domain maps to 7–263; the sequence is MADSERALNL…EVEYLMQRLI (257 aa). The L-tyrosine site is built by Arg77, Arg78, Asn144, Gly146, Ser147, and Thr150. L-tryptophan-binding residues include Asn144, Gly146, and Ser147.

Homodimer.

The protein localises to the cytoplasm. The catalysed reaction is chorismate = prephenate. Its pathway is metabolic intermediate biosynthesis; prephenate biosynthesis; prephenate from chorismate: step 1/1. Each dimer has two allosteric binding sites that can bind the regulatory effectors tryptophan or tyrosine. Can bind either one tryptophan or one tyrosine, two tryptophan or two tyrosine or one tryptophan and one tyrosine, which differentially affect the catalytic activity. Activated by tryptophan and subject to feedback inhibition by tyrosine. In the presence of both tryptophan and tyrosine, the enzyme is in the activated state. In terms of biological role, catalyzes the Claisen rearrangement of chorismate to prephenate. Acts at the first branch point in the aromatic amino acid pathway where it steers biosynthesis towards phenylalanine and tyrosine, and away from tryptophan. The polypeptide is Chorismate mutase (Trichoderma parareesei (Filamentous fungus)).